Consider the following 188-residue polypeptide: Elongation factor P-like protein (188 aa).

Belongs to the elongation factor P family.

This is Elongation factor P-like protein from Vibrio parahaemolyticus serotype O3:K6 (strain RIMD 2210633).